Here is a 638-residue protein sequence, read N- to C-terminus: Zinc finger protein 143 (638 aa).

Methionine 1 carries the post-translational modification N-acetylmethionine. A Glycyl lysine isopeptide (Lys-Gly) (interchain with G-Cter in SUMO2) cross-link involves residue lysine 213. C2H2-type zinc fingers lie at residues 237–261 (FRCK…ERSH), 267–291 (YQCE…FRTH), 297–321 (YRCS…IRTH), and 327–351 (FKCP…IRTH). Threonine 352 is modified (phosphothreonine). 3 C2H2-type zinc fingers span residues 357–381 (YYCT…VRIH), 387–411 (YVCT…HVVH), and 417–440 (YNCN…RTAH). Residue lysine 406 forms a Glycyl lysine isopeptide (Lys-Gly) (interchain with G-Cter in SUMO2) linkage.

The protein belongs to the GLI C2H2-type zinc-finger protein family. As to quaternary structure, interacts with CHD8. Forms a complex with HCFC1 and ZNF143.

The protein resides in the nucleus. Functionally, transcriptional activator. Activates the gene for selenocysteine tRNA (tRNAsec). Binds to the SPH motif of small nuclear RNA (snRNA) gene promoters. Participates in efficient U6 RNA polymerase III transcription via its interaction with CHD8. In complex with HCFC1 and ZNF143, regulates the expression of several genes, including AP2S1, ESCO2, OPHN1, RBL1, UBXN8 and ZNF32. This is Zinc finger protein 143 (Znf143) from Mus musculus (Mouse).